A 497-amino-acid polypeptide reads, in one-letter code: Signal recognition particle subunit SRP54 1 (497 aa).

The G-domain stretch occupies residues 1 to 295 (MVLAQLGGSI…DVKPFVSRLL (295 aa)). GTP is bound by residues 108–115 (GLQGSGKT), 190–194 (DTSGR), and 248–251 (TKLD). An M-domain region spans residues 296-497 (GMGDLSGLMD…MLGGMGLGGD (202 aa)).

It belongs to the GTP-binding SRP family. SRP54 subfamily. In terms of assembly, component of a signal recognition particle (SRP) complex that consists of a 7SL RNA molecule of 300 nucleotides and six protein subunits: SRP72, SRP68, SRP54, SRP19, SRP14 and SRP9.

The protein localises to the cytoplasm. It localises to the endoplasmic reticulum. It carries out the reaction GTP + H2O = GDP + phosphate + H(+). Its function is as follows. Component of the signal recognition particle (SRP) complex, a ribonucleoprotein complex that mediates the cotranslational targeting of secretory and membrane proteins to the endoplasmic reticulum (ER). As part of the SRP complex, associates with the SRP receptor (SR) component SRPRA to target secretory proteins to the endoplasmic reticulum membrane. Binds to the signal sequence of presecretory proteins when they emerge from the ribosomes. Displays basal GTPase activity, and stimulates reciprocal GTPase activation of the SR subunit SRPRA. Forms a guanosine 5'-triphosphate (GTP)-dependent complex with the SR subunit SRPRA. SR compaction and GTPase mediated rearrangement of SR drive SRP-mediated cotranslational protein translocation into the ER. Requires the presence of SRP9/SRP14 and/or SRP19 to stably interact with RNA. This chain is Signal recognition particle subunit SRP54 1 (SRP54-1), found in Hordeum vulgare (Barley).